The following is a 213-amino-acid chain: MRSGVIAQKVGMTRVYNDAGEHVPVTVLRMDGCQVVATRTVEKNGYTAVQLGAGQAKVKNTSKAMRGNFAVANVEPKAKLAEFRVSEDNLLEIGTELKADHFAAGQLVDVTGTTIGKGFAGAMKRHGFGGLRATHGVSVSHRSHGSTGSRQDPGKVFKNKKMAGHMGQTRVTTQNLEVVSTDEDRGLILIKGAVPGSKGAWIIVRDAVKSAAK.

Gln-151 carries the N5-methylglutamine modification.

It belongs to the universal ribosomal protein uL3 family. Part of the 50S ribosomal subunit. Forms a cluster with proteins L14 and L19. Post-translationally, methylated by PrmB.

One of the primary rRNA binding proteins, it binds directly near the 3'-end of the 23S rRNA, where it nucleates assembly of the 50S subunit. This is Large ribosomal subunit protein uL3 from Rhizobium etli (strain ATCC 51251 / DSM 11541 / JCM 21823 / NBRC 15573 / CFN 42).